The chain runs to 209 residues: Pyridoxine/pyridoxamine 5'-phosphate oxidase (209 aa).

Substrate-binding positions include 2 to 5 (RVEY) and Lys66. FMN is bound by residues 61-66 (RTVLCK), 76-77 (FT), Lys83, and Gln105. Positions 123, 127, and 131 each coordinate substrate. Residues 140-141 (QS) and Trp186 contribute to the FMN site. 192–194 (RVH) provides a ligand contact to substrate. Arg196 provides a ligand contact to FMN.

This sequence belongs to the pyridoxamine 5'-phosphate oxidase family. Homodimer. FMN is required as a cofactor.

The enzyme catalyses pyridoxamine 5'-phosphate + O2 + H2O = pyridoxal 5'-phosphate + H2O2 + NH4(+). It carries out the reaction pyridoxine 5'-phosphate + O2 = pyridoxal 5'-phosphate + H2O2. Its pathway is cofactor metabolism; pyridoxal 5'-phosphate salvage; pyridoxal 5'-phosphate from pyridoxamine 5'-phosphate: step 1/1. It functions in the pathway cofactor metabolism; pyridoxal 5'-phosphate salvage; pyridoxal 5'-phosphate from pyridoxine 5'-phosphate: step 1/1. Its function is as follows. Catalyzes the oxidation of either pyridoxine 5'-phosphate (PNP) or pyridoxamine 5'-phosphate (PMP) into pyridoxal 5'-phosphate (PLP). The sequence is that of Pyridoxine/pyridoxamine 5'-phosphate oxidase from Mycobacterium sp. (strain JLS).